A 454-amino-acid chain; its full sequence is Tubulin alpha-A chain (454 aa).

Residues Gln-12, Asp-72, Ser-141, Gly-145, Thr-146, Thr-180, Asn-207, and Asn-229 each contribute to the GTP site. Mg(2+) is bound at residue Asp-72. The active site involves Glu-255.

The protein belongs to the tubulin family. As to quaternary structure, dimer of alpha and beta chains. A typical microtubule is a hollow water-filled tube with an outer diameter of 25 nm and an inner diameter of 15 nM. Alpha-beta heterodimers associate head-to-tail to form protofilaments running lengthwise along the microtubule wall with the beta-tubulin subunit facing the microtubule plus end conferring a structural polarity. Microtubules usually have 13 protofilaments but different protofilament numbers can be found in some organisms and specialized cells. The cofactor is Mg(2+).

Its subcellular location is the cytoplasm. It is found in the cytoskeleton. It carries out the reaction GTP + H2O = GDP + phosphate + H(+). Its function is as follows. Tubulin is the major constituent of microtubules, a cylinder consisting of laterally associated linear protofilaments composed of alpha- and beta-tubulin heterodimers. Microtubules grow by the addition of GTP-tubulin dimers to the microtubule end, where a stabilizing cap forms. Below the cap, tubulin dimers are in GDP-bound state, owing to GTPase activity of alpha-tubulin. In Neurospora crassa (strain ATCC 24698 / 74-OR23-1A / CBS 708.71 / DSM 1257 / FGSC 987), this protein is Tubulin alpha-A chain (tba-1).